A 125-amino-acid polypeptide reads, in one-letter code: Small ribosomal subunit protein eS8 (125 aa).

Positions methionine 1 to leucine 11 are enriched in polar residues. The segment at methionine 1–aspartate 38 is disordered. Over residues lysine 25 to aspartate 38 the composition is skewed to basic and acidic residues.

It belongs to the eukaryotic ribosomal protein eS8 family. In terms of assembly, part of the 30S ribosomal subunit.

The polypeptide is Small ribosomal subunit protein eS8 (Methanobrevibacter smithii (strain ATCC 35061 / DSM 861 / OCM 144 / PS)).